Reading from the N-terminus, the 104-residue chain is uncharacterized protein (104 aa).

An HIT domain is found at 3–104; that stretch reads VFEKIIQGEI…HFHILSGDKH (102 aa). The short motif at 93–97 is the Histidine triad motif element; that stretch reads HLHFH.

This is an uncharacterized protein from Helicobacter pylori (strain J99 / ATCC 700824) (Campylobacter pylori J99).